Consider the following 781-residue polypeptide: Transcription factor Sp3 (781 aa).

Basic and acidic residues predominate over residues 1-12; that stretch reads MTAPEKPVKQEE. 2 disordered regions span residues 1–53 and 65–88; these read MTAP…AAQD and TCSK…AGAP. Over residues 20-31 the composition is skewed to gly residues; the sequence is SGGGGGGGGGHG. Residues 32 to 53 show a composition bias toward low complexity; the sequence is EYLQQQQQHGNGAVAAAAAAQD. At Ser73 the chain carries Phosphoserine. A Glycyl lysine isopeptide (Lys-Gly) (interchain with G-Cter in SUMO) cross-link involves residue Lys120. A transactivation domain (Gln-rich) region spans residues 138 to 237; that stretch reads QYVLPLQNLQ…IPQTGQVQVQ (100 aa). A disordered region spans residues 301–338; sequence QAMDSSDNSERTGERVSPDINETNTDTDLFVPTSSSSQ. Over residues 308–317 the composition is skewed to basic and acidic residues; it reads NSERTGERVS. Over residues 320–338 the composition is skewed to polar residues; that stretch reads INETNTDTDLFVPTSSSSQ. Residues 350-499 are transactivation domain (Gln-rich); it reads QQNTNSLTTS…TPVQTLTLGQ (150 aa). The short motif at 461 to 469 is the 9aaTAD element; sequence VTWQTFQVQ. The tract at residues 534–620 is repressor domain; the sequence is IQLHPGENAD…RGTNLGKKKQ (87 aa). The residue at position 551 (Lys551) is an N6-acetyllysine; alternate. Lys551 is covalently cross-linked (Glycyl lysine isopeptide (Lys-Gly) (interchain with G-Cter in SUMO); alternate). Lys551 is covalently cross-linked (Glycyl lysine isopeptide (Lys-Gly) (interchain with G-Cter in SUMO1); alternate). Lys551 participates in a covalent cross-link: Glycyl lysine isopeptide (Lys-Gly) (interchain with G-Cter in SUMO2); alternate. Ser563 and Ser566 each carry phosphoserine. Lys593 participates in a covalent cross-link: Glycyl lysine isopeptide (Lys-Gly) (interchain with G-Cter in SUMO2). The C2H2-type 1 zinc-finger motif lies at 621–645; that stretch reads HICHIPGCGKVYGKTSHLRAHLRWH. Phosphoserine is present on Ser646. 2 C2H2-type zinc fingers span residues 651–675 and 681–703; these read FVCN…RRTH and FVCP…IKTH.

The protein belongs to the Sp1 C2H2-type zinc-finger protein family. Interacts with HLTF; the interaction may be required for basal transcriptional activity of HLTF. Interacts with HDAC1; the interaction deacetylates SP3 and regulates its transcriptional activity. Interacts with HDAC2 (preferably the CK2-phosphorylated form); the interaction deacetylates SP3 and regulates its transcriptional activity. Interacts with MEIS2 isoform 4 and PBX1 isoform PBX1a. In terms of processing, not glycosylated. Post-translationally, acetylated by histone acetyltransferase p300, deacetylated by HDACs. Acetylation/deacetylation states regulate transcriptional activity. Acetylation appears to activate transcription. Alternate sumoylation and acetylation at Lys-551 also control transcriptional activity. Ceramides can also regulate acetylation/deacetylation events through altering the interaction of HDAC with SP3. In vitro, C(18)-ceramides, but not C(16)-ceramides, increase the interaction of HDAC1 with SP3 and enhance the deacetylation of SP3 and the subsequent repression of the TERT promoter. Sumoylated on all isoforms. Sumoylated on 2 sites in longer isoforms with Lys-551 being the major site. Sumoylation at this site promotes nuclear localization to the nuclear periphery, nuclear dots and PML nuclear bodies. Sumoylation on Lys-551 represses the transactivation activity, except for the largest isoform, L-Sp3, which has little effect on transactivation. Alternate sumoylation and acetylation at Lys-551 also control transcriptional activity. As to expression, ubiquitously expressed.

The protein localises to the nucleus. The protein resides in the PML body. Transcriptional factor that can act as an activator or repressor depending on isoform and/or post-translational modifications. Binds to GT and GC boxes promoter elements. Competes with SP1 for the GC-box promoters. Weak activator of transcription but can activate a number of genes involved in different processes such as cell-cycle regulation, hormone-induction and house-keeping. The chain is Transcription factor Sp3 (SP3) from Homo sapiens (Human).